The primary structure comprises 252 residues: Triosephosphate isomerase (252 aa).

9–11 (NWK) contributes to the substrate binding site. His95 serves as the catalytic Electrophile. The active-site Proton acceptor is Glu167. Residues Gly173, Ser211, and 232–233 (GG) each bind substrate.

Belongs to the triosephosphate isomerase family. As to quaternary structure, homodimer.

It is found in the cytoplasm. It catalyses the reaction D-glyceraldehyde 3-phosphate = dihydroxyacetone phosphate. Its pathway is carbohydrate biosynthesis; gluconeogenesis. The protein operates within carbohydrate degradation; glycolysis; D-glyceraldehyde 3-phosphate from glycerone phosphate: step 1/1. In terms of biological role, involved in the gluconeogenesis. Catalyzes stereospecifically the conversion of dihydroxyacetone phosphate (DHAP) to D-glyceraldehyde-3-phosphate (G3P). The sequence is that of Triosephosphate isomerase from Marinobacter nauticus (strain ATCC 700491 / DSM 11845 / VT8) (Marinobacter aquaeolei).